The sequence spans 342 residues: MTKILGIESSCDDTAVSIITENREILSNIIISQNTEHAVFGGVVPEIAARSHLSNLDKALKSVLKESDTKLTEISAIAATSGPGLIGGVIVGSMFARSLSSALKKPFIAINHLEGHALTARLTDNIPYPYLLLLASGGHCQFVAILGLRKYKILGSTIDDAVGEAFDKVAKMLNLGFPGGSEIETRAKFGNSHKYKFPKPIINSGNCNMSFSGLKTAVRTLIMSLKEINDTVVNDIAASFQFTIGEILSSKLQDAIRAYEQMINNCDKKNIVIAGGVAANKYLQEILSSGAKTYGYQLIYPPIHLCTDNAAMIAYAGLERYNNKLFTPLNFCPKARWNLEEI.

Positions 112 and 116 each coordinate Fe cation. Residues 134 to 138, Asp167, Gly180, and Asn280 contribute to the substrate site; that span reads LASGG. Asp308 serves as a coordination point for Fe cation.

This sequence belongs to the KAE1 / TsaD family. Fe(2+) is required as a cofactor.

The protein localises to the cytoplasm. The enzyme catalyses L-threonylcarbamoyladenylate + adenosine(37) in tRNA = N(6)-L-threonylcarbamoyladenosine(37) in tRNA + AMP + H(+). Functionally, required for the formation of a threonylcarbamoyl group on adenosine at position 37 (t(6)A37) in tRNAs that read codons beginning with adenine. Is involved in the transfer of the threonylcarbamoyl moiety of threonylcarbamoyl-AMP (TC-AMP) to the N6 group of A37, together with TsaE and TsaB. TsaD likely plays a direct catalytic role in this reaction. This chain is tRNA N6-adenosine threonylcarbamoyltransferase, found in Rickettsia canadensis (strain McKiel).